Reading from the N-terminus, the 178-residue chain is Large ribosomal subunit protein uL6 (178 aa).

It belongs to the universal ribosomal protein uL6 family. In terms of assembly, part of the 50S ribosomal subunit.

Functionally, this protein binds to the 23S rRNA, and is important in its secondary structure. It is located near the subunit interface in the base of the L7/L12 stalk, and near the tRNA binding site of the peptidyltransferase center. The sequence is that of Large ribosomal subunit protein uL6 from Streptococcus pneumoniae serotype 19F (strain G54).